A 67-amino-acid chain; its full sequence is MAVPKRKMSRSNTRARRSQWKAEAPTLVKTIENGKVVYSMPHRARVIEDAAGTPLYMEYKGRKVADV.

Positions 1 to 19 are enriched in basic residues; that stretch reads MAVPKRKMSRSNTRARRSQ. The disordered stretch occupies residues 1 to 21; sequence MAVPKRKMSRSNTRARRSQWK.

This sequence belongs to the bacterial ribosomal protein bL32 family.

The chain is Large ribosomal subunit protein bL32 from Clavibacter sepedonicus (Clavibacter michiganensis subsp. sepedonicus).